We begin with the raw amino-acid sequence, 265 residues long: 3-methyl-2-oxobutanoate hydroxymethyltransferase (265 aa).

2 residues coordinate Mg(2+): Asp-45 and Asp-84. 3-methyl-2-oxobutanoate is bound by residues 45–46 (DS), Asp-84, and Lys-112. Glu-114 is a Mg(2+) binding site. The active-site Proton acceptor is the Glu-181.

This sequence belongs to the PanB family. Homodecamer; pentamer of dimers. Mg(2+) is required as a cofactor.

The protein localises to the cytoplasm. The catalysed reaction is 3-methyl-2-oxobutanoate + (6R)-5,10-methylene-5,6,7,8-tetrahydrofolate + H2O = 2-dehydropantoate + (6S)-5,6,7,8-tetrahydrofolate. Its pathway is cofactor biosynthesis; (R)-pantothenate biosynthesis; (R)-pantoate from 3-methyl-2-oxobutanoate: step 1/2. Its function is as follows. Catalyzes the reversible reaction in which hydroxymethyl group from 5,10-methylenetetrahydrofolate is transferred onto alpha-ketoisovalerate to form ketopantoate. In Yersinia pseudotuberculosis serotype O:1b (strain IP 31758), this protein is 3-methyl-2-oxobutanoate hydroxymethyltransferase.